Reading from the N-terminus, the 200-residue chain is Small ribosomal subunit protein uS4c (200 aa).

Positions 20–42 are disordered; that stretch reads GLTRKTTTRTSRPGQHGTQARKP. Over residues 23–37 the composition is skewed to polar residues; it reads RKTTTRTSRPGQHGT. Residues 90–152 enclose the S4 RNA-binding domain; that stretch reads MRLDNVIFRL…PKSQSIVKNY (63 aa).

It belongs to the universal ribosomal protein uS4 family. As to quaternary structure, part of the 30S ribosomal subunit. Contacts protein S5. The interaction surface between S4 and S5 is involved in control of translational fidelity.

The protein localises to the plastid. It localises to the chloroplast. In terms of biological role, one of the primary rRNA binding proteins, it binds directly to 16S rRNA where it nucleates assembly of the body of the 30S subunit. Its function is as follows. With S5 and S12 plays an important role in translational accuracy. The chain is Small ribosomal subunit protein uS4c (rps4) from Guillardia theta (Cryptophyte).